Consider the following 698-residue polypeptide: Polyphosphate kinase 1 (698 aa).

ATP is bound at residue Asn46. Mg(2+)-binding residues include Arg377 and Arg407. His437 serves as the catalytic Phosphohistidine intermediate. 3 residues coordinate ATP: Tyr470, Arg566, and His594.

The protein belongs to the polyphosphate kinase 1 (PPK1) family. Mg(2+) is required as a cofactor. In terms of processing, an intermediate of this reaction is the autophosphorylated ppk in which a phosphate is covalently linked to a histidine residue through a N-P bond.

The catalysed reaction is [phosphate](n) + ATP = [phosphate](n+1) + ADP. Its function is as follows. Catalyzes the reversible transfer of the terminal phosphate of ATP to form a long-chain polyphosphate (polyP). This is Polyphosphate kinase 1 from Chlorobaculum tepidum (strain ATCC 49652 / DSM 12025 / NBRC 103806 / TLS) (Chlorobium tepidum).